A 252-amino-acid polypeptide reads, in one-letter code: Ubiquinone/menaquinone biosynthesis C-methyltransferase UbiE (252 aa).

Residues Thr71, Asp100, 124–125 (DA), and Ser141 each bind S-adenosyl-L-methionine.

This sequence belongs to the class I-like SAM-binding methyltransferase superfamily. MenG/UbiE family.

The catalysed reaction is a 2-demethylmenaquinol + S-adenosyl-L-methionine = a menaquinol + S-adenosyl-L-homocysteine + H(+). It catalyses the reaction a 2-methoxy-6-(all-trans-polyprenyl)benzene-1,4-diol + S-adenosyl-L-methionine = a 5-methoxy-2-methyl-3-(all-trans-polyprenyl)benzene-1,4-diol + S-adenosyl-L-homocysteine + H(+). It participates in quinol/quinone metabolism; menaquinone biosynthesis; menaquinol from 1,4-dihydroxy-2-naphthoate: step 2/2. The protein operates within cofactor biosynthesis; ubiquinone biosynthesis. Its function is as follows. Methyltransferase required for the conversion of demethylmenaquinol (DMKH2) to menaquinol (MKH2) and the conversion of 2-polyprenyl-6-methoxy-1,4-benzoquinol (DDMQH2) to 2-polyprenyl-3-methyl-6-methoxy-1,4-benzoquinol (DMQH2). This is Ubiquinone/menaquinone biosynthesis C-methyltransferase UbiE from Caulobacter sp. (strain K31).